The sequence spans 228 residues: Cytochrome c oxidase subunit 2 (228 aa).

Topologically, residues 1-26 (MATWANLGLQNSSSPLMEQLNFFHDH) are mitochondrial intermembrane. A helical membrane pass occupies residues 27–48 (TLLILIMITVMIAYIMFMLFFN). Residues 49–62 (KFTNRYLLHGQTIE) lie on the Mitochondrial matrix side of the membrane. The chain crosses the membrane as a helical span at residues 63–82 (IIWTILPAIILMFIAFPSLR). The Mitochondrial intermembrane portion of the chain corresponds to 83–228 (LLYLMDEINS…FIKWISSQMN (146 aa)). Cu cation contacts are provided by histidine 161, cysteine 196, glutamate 198, cysteine 200, histidine 204, and methionine 207. Glutamate 198 contributes to the Mg(2+) binding site.

This sequence belongs to the cytochrome c oxidase subunit 2 family. Component of the cytochrome c oxidase (complex IV, CIV), a multisubunit enzyme composed of a catalytic core of 3 subunits and several supernumerary subunits. The complex exists as a monomer or a dimer and forms supercomplexes (SCs) in the inner mitochondrial membrane with ubiquinol-cytochrome c oxidoreductase (cytochrome b-c1 complex, complex III, CIII). Cu cation serves as cofactor.

The protein resides in the mitochondrion inner membrane. The catalysed reaction is 4 Fe(II)-[cytochrome c] + O2 + 8 H(+)(in) = 4 Fe(III)-[cytochrome c] + 2 H2O + 4 H(+)(out). Functionally, component of the cytochrome c oxidase, the last enzyme in the mitochondrial electron transport chain which drives oxidative phosphorylation. The respiratory chain contains 3 multisubunit complexes succinate dehydrogenase (complex II, CII), ubiquinol-cytochrome c oxidoreductase (cytochrome b-c1 complex, complex III, CIII) and cytochrome c oxidase (complex IV, CIV), that cooperate to transfer electrons derived from NADH and succinate to molecular oxygen, creating an electrochemical gradient over the inner membrane that drives transmembrane transport and the ATP synthase. Cytochrome c oxidase is the component of the respiratory chain that catalyzes the reduction of oxygen to water. Electrons originating from reduced cytochrome c in the intermembrane space (IMS) are transferred via the dinuclear copper A center (CU(A)) of subunit 2 and heme A of subunit 1 to the active site in subunit 1, a binuclear center (BNC) formed by heme A3 and copper B (CU(B)). The BNC reduces molecular oxygen to 2 water molecules using 4 electrons from cytochrome c in the IMS and 4 protons from the mitochondrial matrix. This chain is Cytochrome c oxidase subunit 2 (COII), found in Aedes aegypti (Yellowfever mosquito).